We begin with the raw amino-acid sequence, 446 residues long: Exodeoxyribonuclease 7 large subunit (446 aa).

It belongs to the XseA family. Heterooligomer composed of large and small subunits.

The protein resides in the cytoplasm. It catalyses the reaction Exonucleolytic cleavage in either 5'- to 3'- or 3'- to 5'-direction to yield nucleoside 5'-phosphates.. In terms of biological role, bidirectionally degrades single-stranded DNA into large acid-insoluble oligonucleotides, which are then degraded further into small acid-soluble oligonucleotides. The protein is Exodeoxyribonuclease 7 large subunit of Vibrio cholerae serotype O1 (strain ATCC 39541 / Classical Ogawa 395 / O395).